The following is a 212-amino-acid chain: Transmembrane protein 186 (212 aa).

Residues 1–78 (MAAVLRAVAR…YLSRLKVAQT (78 aa)) are Mitochondrial matrix-facing. The helical transmembrane segment at 79-99 (ALTVAALPPGLYCYSQGLMPF) threads the bilayer. Residues 100–101 (SS) are Mitochondrial intermembrane-facing. A helical membrane pass occupies residues 102 to 122 (LCLAGGVAGFALAMLCWMSHF). At 123–212 (FRRLVGILYV…QVFGVLDALK (90 aa)) the chain is on the mitochondrial matrix side.

The protein belongs to the TMEM186 family. As to quaternary structure, part of the mitochondrial complex I assembly/MCIA complex that comprises at least the core subunits TMEM126B, NDUFAF1, ECSIT and ACAD9 and complement subunits such as COA1 and TMEM186. Interacts with MT-ND3.

The protein resides in the mitochondrion inner membrane. In terms of biological role, as part of the MCIA complex, required for efficient assembly of the mitochondrial complex I. This Bos taurus (Bovine) protein is Transmembrane protein 186.